We begin with the raw amino-acid sequence, 210 residues long: MRTKKLPALRVGVGGPVGSGKTTLLEMLCKAMRERYDLVAITNDIYTKEDQRLLTLSGALPAERIMGVETGGCPHTAIREDASINLEAVDRMLARFPDADVVFIESGGDNLAATFSPELSDLTIYVIDVAGGEKIPRKGGPGITKSDLLIINKTDLAPYVGASLDVMASDARKMRGDRPFVMCNLKEQAGLDAVVRFIEQQGMLAAPAAG.

15–22 lines the GTP pocket; it reads GPVGSGKT.

It belongs to the SIMIBI class G3E GTPase family. UreG subfamily. As to quaternary structure, homodimer. UreD, UreF and UreG form a complex that acts as a GTP-hydrolysis-dependent molecular chaperone, activating the urease apoprotein by helping to assemble the nickel containing metallocenter of UreC. The UreE protein probably delivers the nickel.

It is found in the cytoplasm. Facilitates the functional incorporation of the urease nickel metallocenter. This process requires GTP hydrolysis, probably effectuated by UreG. The protein is Urease accessory protein UreG of Ralstonia nicotianae (strain ATCC BAA-1114 / GMI1000) (Ralstonia solanacearum).